Consider the following 518-residue polypeptide: MPNIDLPTLEAFVHAIPQNYKGPGGAVAVVRNGEIVLRHAWGFADLAARKAMTPETRMPICSVSKQFTCAVLLDCIGEPEMLDSALAAYLDQFEDGRPAVRDLCNNQSGLRDYWALTVLCGAAPEGIFLPDQAQNLLRRLKTTHFAPGTHYSYCNGNFRILADLIEQHTGRSLADLLAERIFAPAAMKTAELIPDTALFNECTGYEGDTVRGFLPAINRIHWLGDAGICASLDDMIAWEQFIDRTRHDENGLYRRLSSPQTFADGAPAPYGFGLKFEETGGKRLTGHGGALRGWRCQRWHCADERISTIVMFNFEGNASDAALKMMNAALGIPPAKPVRAQANPGWFGSWLNPETGLVLSLEDAGGGRMKARFGTGPEKMDISGENEAQSSMTTLRRDGDMIHLARKDENLHLAMHRLKGKARQDIAGRYRSDELEADLLLVSEGGAIYGAFEGFLGKSDMYPLYAAGPDVWLLPVQRSMDAPSPGEWKLVFHRDAAGRITGVTVGCWLARGVEYKRL.

The active-site Nucleophile is S62. Residue K65 is the Proton donor/acceptor of the active site. A disordered region spans residues 373–392; sequence FGTGPEKMDISGENEAQSSM. The segment at 477-487 is important for specificity; it reads QRSMDAPSPGE. Position 481 (D481) interacts with substrate.

It belongs to the peptidase S12 family. In terms of assembly, homodimer.

It carries out the reaction Release of an N-terminal D-amino acid from a peptide, Xaa-|-Yaa-, in which Xaa is preferably D-Ala, D-Ser or D-Thr. D-amino acid amides and methyl esters also are hydrolyzed, as is glycine amide.. With respect to regulation, inhibited by beta-lactam compounds such as 6-aminopenicillic acid, 7-aminocephalosporanic acid, benzylpenicillin and ampicillin. Inhibited by p-chloromercuribenzoate. Hydrolyzes N-terminal residues in D-amino acid-containing peptides. In Brucella melitensis biotype 2 (strain ATCC 23457), this protein is D-aminopeptidase.